Here is a 489-residue protein sequence, read N- to C-terminus: CDK5RAP3 protein homolog (489 aa).

This sequence belongs to the CDK5RAP3 family.

Its function is as follows. Substrate adapter of E3 ligase complexes mediating ufmylation, the covalent attachment of the ubiquitin-like modifier UFM1 to substrate proteins, and which is involved in various processes, such as ribosome recycling and reticulophagy (also called ER-phagy). In Caenorhabditis elegans, this protein is CDK5RAP3 protein homolog.